The chain runs to 351 residues: Anthranilate phosphoribosyltransferase (351 aa).

5-phospho-alpha-D-ribose 1-diphosphate is bound by residues Gly-80, 83–84 (GD), Thr-88, 90–93 (NIST), 108–116 (KHGNRSVTS), and Ser-120. Gly-80 serves as a coordination point for anthranilate. A Mg(2+)-binding site is contributed by Ser-92. Asn-111 is an anthranilate binding site. Arg-166 contacts anthranilate. Mg(2+)-binding residues include Asp-229 and Glu-230.

Belongs to the anthranilate phosphoribosyltransferase family. In terms of assembly, homodimer. Mg(2+) serves as cofactor.

It catalyses the reaction N-(5-phospho-beta-D-ribosyl)anthranilate + diphosphate = 5-phospho-alpha-D-ribose 1-diphosphate + anthranilate. Its pathway is amino-acid biosynthesis; L-tryptophan biosynthesis; L-tryptophan from chorismate: step 2/5. Its function is as follows. Catalyzes the transfer of the phosphoribosyl group of 5-phosphorylribose-1-pyrophosphate (PRPP) to anthranilate to yield N-(5'-phosphoribosyl)-anthranilate (PRA). This chain is Anthranilate phosphoribosyltransferase, found in Chlorobium limicola (strain DSM 245 / NBRC 103803 / 6330).